Reading from the N-terminus, the 743-residue chain is F-box protein COS111 (743 aa).

The F-box domain maps to Glu-145–Leu-191. 2 disordered regions span residues Ile-224–Tyr-257 and Phe-311–Thr-330. A compositionally biased stretch (acidic residues) spans Asp-229–Asn-248.

Its function is as follows. F-box protein probably involved in ubiquitin conjugation pathway. The protein is F-box protein COS111 (COS111) of Candida albicans (strain SC5314 / ATCC MYA-2876) (Yeast).